The sequence spans 473 residues: MSLGYAEKLSFIEDVGQVGMAEFFDPSHLLQCKIEELAKLIQKSKHLVVFTGAGISTSCGIPDFRGPKGIWTLQREGKDLPKASLPFHRAMPSMTHMALVELERAGILKFVISQNVDGLHLRSGIPREKLSELHGDSFMEMCPSCGAEYLRDFEVETIGLKETSRKCSVEKCGAKLKDTVLDWEDALPPKEIDPAEKHCKKADLVLCLGTSLQITPACNLPLKCLKGGGKIVIVNLQKTPKDKKANVVIHGLVDKVVAGVMESLNMKIPPYVRIDLFQIILTQSISGDQRFINWTLRVASVHGLTSQLPFIKSIEVSFSDNHNYKDAVLDKQPFLMKRRTARNETFDIFFKVNYSDGCDCVSTQLSLPFEFKISTEEHVEIIDKEAVLQSLREKAVEESSCGQSGVVERRVVSEPRSEAVVYATVTSLRTYHSQQSLLANGDLKWKLEGSGTSRKRSRTGKRKSKALAEETKA.

A Deacetylase sirtuin-type domain is found at Ser27–Lys267. Residues Gly52–Trp71 and Gln114–Asp117 contribute to the NAD(+) site. His134 (proton acceptor) is an active-site residue. Zn(2+) contacts are provided by Cys142, Cys145, Cys167, and Cys172. NAD(+)-binding positions include Gly209 to Ser211, Asn235 to Gln237, and Val253. The tract at residues Leu447 to Ala473 is disordered. A compositionally biased stretch (basic residues) spans Ser453–Lys465.

This sequence belongs to the sirtuin family. Class IV subfamily. As to quaternary structure, binds to the promoter region of genes influenced by ethylene. Interacts with ENAP1; this interaction is enhanced in the presence of ethylene. Zn(2+) serves as cofactor.

It is found in the nucleus. The enzyme catalyses N(6)-acetyl-L-lysyl-[protein] + NAD(+) + H2O = 2''-O-acetyl-ADP-D-ribose + nicotinamide + L-lysyl-[protein]. Functionally, NAD-dependent protein deacetylase. Has deacetylase activity towards H3K9Ac. May have a function in the safeguard against genome instability and DNA damage to ensure plant cell growth. Involved in responses to ethylene leading to the transcriptional repression of some ethylene-responsive genes via the regulation of histone acetylation H3K9Ac. This Arabidopsis thaliana (Mouse-ear cress) protein is NAD-dependent protein deacetylase SRT1.